The following is a 239-amino-acid chain: Pyridoxine 5'-phosphate synthase (239 aa).

Position 7 (Asn-7) interacts with 3-amino-2-oxopropyl phosphate. 9–10 is a binding site for 1-deoxy-D-xylulose 5-phosphate; the sequence is DH. Arg-18 contacts 3-amino-2-oxopropyl phosphate. Residue His-43 is the Proton acceptor of the active site. 2 residues coordinate 1-deoxy-D-xylulose 5-phosphate: Arg-45 and His-50. Residue Glu-70 is the Proton acceptor of the active site. 1-deoxy-D-xylulose 5-phosphate is bound at residue Thr-100. Residue His-191 is the Proton donor of the active site. 3-amino-2-oxopropyl phosphate contacts are provided by residues Gly-192 and 213-214; that span reads GH.

The protein belongs to the PNP synthase family. As to quaternary structure, homooctamer; tetramer of dimers.

It localises to the cytoplasm. The catalysed reaction is 3-amino-2-oxopropyl phosphate + 1-deoxy-D-xylulose 5-phosphate = pyridoxine 5'-phosphate + phosphate + 2 H2O + H(+). It functions in the pathway cofactor biosynthesis; pyridoxine 5'-phosphate biosynthesis; pyridoxine 5'-phosphate from D-erythrose 4-phosphate: step 5/5. Its function is as follows. Catalyzes the complicated ring closure reaction between the two acyclic compounds 1-deoxy-D-xylulose-5-phosphate (DXP) and 3-amino-2-oxopropyl phosphate (1-amino-acetone-3-phosphate or AAP) to form pyridoxine 5'-phosphate (PNP) and inorganic phosphate. In Pelobacter propionicus (strain DSM 2379 / NBRC 103807 / OttBd1), this protein is Pyridoxine 5'-phosphate synthase.